Consider the following 607-residue polypeptide: ATP-dependent rRNA helicase SPB4 (607 aa).

Residues 7 to 35 (WDDLEYPIQPWIRSAVDVMGFENMTPVQA) carry the Q motif motif. The 187-residue stretch at 38 to 224 (IPLFARNKDV…KTGLRNPVKV (187 aa)) folds into the Helicase ATP-binding domain. 51 to 58 (SVTGSGKT) lines the ATP pocket. Residues 172–175 (DEAD) carry the DEAD box motif. The Helicase C-terminal domain maps to 248–404 (KLEQVISIIN…EISLDIVNLP (157 aa)). A disordered region spans residues 527 to 607 (KSELKKKNMS…NGMQGSFDDL (81 aa)). Residues 529-565 (ELKKKNMSWSNNTQSKEEKVERRTKMALKRKRIEEEL) are a coiled coil. Basic and acidic residues-rich tracts occupy residues 543 to 552 (SKEEKVERRT) and 560 to 570 (RIEEELSKEAD). The span at 587–601 (ILQNKKSKNSNNGMQ) shows a compositional bias: polar residues.

It belongs to the DEAD box helicase family. DDX55/SPB4 subfamily. As to quaternary structure, component of pre-60S ribosomal complexes.

The protein localises to the nucleus. The protein resides in the nucleolus. It carries out the reaction ATP + H2O = ADP + phosphate + H(+). Functionally, ATP-binding RNA helicase involved in the biogenesis of 60S ribosomal subunits. Binds 90S pre-ribosomal particles and dissociates from pre-60S ribosomal particles after processing of 27SB pre-rRNA. Required for the normal formation of 18S rRNA through the processing of pre-rRNAs at sites A0, A1 and A2, and the normal formation of 25S and 5.8S rRNAs through the processing of pre-rRNAs at sites C1 and C2. In Vanderwaltozyma polyspora (strain ATCC 22028 / DSM 70294 / BCRC 21397 / CBS 2163 / NBRC 10782 / NRRL Y-8283 / UCD 57-17) (Kluyveromyces polysporus), this protein is ATP-dependent rRNA helicase SPB4.